A 394-amino-acid chain; its full sequence is 1-deoxy-D-xylulose 5-phosphate reductoisomerase (394 aa).

6 residues coordinate NADPH: T10, G11, S12, I13, N38, and N125. K126 contacts 1-deoxy-D-xylulose 5-phosphate. Residue E127 coordinates NADPH. D151 provides a ligand contact to Mn(2+). 1-deoxy-D-xylulose 5-phosphate-binding residues include S152, E153, S182, and H205. Residue E153 coordinates Mn(2+). G211 serves as a coordination point for NADPH. 1-deoxy-D-xylulose 5-phosphate is bound by residues S218, N223, K224, and E227. E227 contacts Mn(2+).

The protein belongs to the DXR family. It depends on Mg(2+) as a cofactor. The cofactor is Mn(2+).

It carries out the reaction 2-C-methyl-D-erythritol 4-phosphate + NADP(+) = 1-deoxy-D-xylulose 5-phosphate + NADPH + H(+). Its pathway is isoprenoid biosynthesis; isopentenyl diphosphate biosynthesis via DXP pathway; isopentenyl diphosphate from 1-deoxy-D-xylulose 5-phosphate: step 1/6. In terms of biological role, catalyzes the NADPH-dependent rearrangement and reduction of 1-deoxy-D-xylulose-5-phosphate (DXP) to 2-C-methyl-D-erythritol 4-phosphate (MEP). This Methylococcus capsulatus (strain ATCC 33009 / NCIMB 11132 / Bath) protein is 1-deoxy-D-xylulose 5-phosphate reductoisomerase.